A 284-amino-acid chain; its full sequence is GPN-loop GTPase 3 (284 aa).

13–18 (GSGKST) contacts GTP. Positions 72-74 (GPN) match the Gly-Pro-Asn (GPN)-loop; involved in dimer interface motif. 174–177 (TKMD) contributes to the GTP binding site.

This sequence belongs to the GPN-loop GTPase family. In terms of assembly, heterodimer with GPN1. Binds to RNA polymerase II (RNAPII). Interacts directly with subunits RPB4 and RPB7 and the CTD of RPB1.

In terms of biological role, small GTPase required for proper localization of RNA polymerase II (RNAPII). May act at an RNAP assembly step prior to nuclear import. This chain is GPN-loop GTPase 3, found in Homo sapiens (Human).